The primary structure comprises 521 residues: ATP synthase subunit beta (521 aa).

Composition is skewed to low complexity over residues 1 to 21 and 28 to 42; these read MAKA…AAKA and PKTT…TKSG. The tract at residues 1–42 is disordered; the sequence is MAKAATPKTTAAAEAKPAAKAPAKKAAPKTTAAAKPAATKSG. 199–206 contributes to the ATP binding site; it reads GGAGVGKT.

The protein belongs to the ATPase alpha/beta chains family. In terms of assembly, F-type ATPases have 2 components, CF(1) - the catalytic core - and CF(0) - the membrane proton channel. CF(1) has five subunits: alpha(3), beta(3), gamma(1), delta(1), epsilon(1). CF(0) has three main subunits: a(1), b(2) and c(9-12). The alpha and beta chains form an alternating ring which encloses part of the gamma chain. CF(1) is attached to CF(0) by a central stalk formed by the gamma and epsilon chains, while a peripheral stalk is formed by the delta and b chains.

Its subcellular location is the cell inner membrane. It carries out the reaction ATP + H2O + 4 H(+)(in) = ADP + phosphate + 5 H(+)(out). In terms of biological role, produces ATP from ADP in the presence of a proton gradient across the membrane. The catalytic sites are hosted primarily by the beta subunits. This is ATP synthase subunit beta from Brucella canis (strain ATCC 23365 / NCTC 10854 / RM-666).